Here is a 119-residue protein sequence, read N- to C-terminus: uncharacterized protein (119 aa).

Cys-9 and Cys-12 are joined by a disulfide.

Belongs to the ArsC family.

This is an uncharacterized protein from Streptomyces viridochromogenes.